Here is a 776-residue protein sequence, read N- to C-terminus: Protein STRUBBELIG-RECEPTOR FAMILY 3 (776 aa).

The signal sequence occupies residues 1–29 (MAAKRSIYCLLLLPLLLSLLIWIPSISLA). Over 30–35 (ATNPDD) the chain is Cytoplasmic. The helical transmembrane segment at 36–56 (VAAINGLFAALGAPVLPGWIA) threads the bilayer. The Extracellular segment spans residues 57–316 (SGGDPCGEAW…KGKNSSHTKK (260 aa)). N-linked (GlcNAc...) asparagine glycosylation is present at N72. LRR repeat units follow at residues 99–120 (SIRG…TLPV), 121–143 (TLQH…LGTL), 145–167 (FLND…FQNL), 169–191 (GLIN…MENL), 193–215 (TLTT…QGLP), and 216–236 (LQDL…KLLS). N179 carries N-linked (GlcNAc...) asparagine glycosylation. 2 N-linked (GlcNAc...) asparagine glycosylation sites follow: N248 and N253. A disordered region spans residues 251–311 (MINSTSTAPS…SSENSKGKNS (61 aa)). Over residues 254 to 268 (STSTAPSLSPSLSPT) the composition is skewed to low complexity. Residues 269–284 (KPAPTRPFSGVPPPPN) are compositionally biased toward pro residues. Low complexity predominate over residues 298–309 (SEGSSSENSKGK). Residue N310 is glycosylated (N-linked (GlcNAc...) asparagine). The helical transmembrane segment at 317–337 (IILIAFAGVLVFIILVLAILL) threads the bilayer. Residues 338 to 776 (LLPKCARRRE…RHGSGDSTAD (439 aa)) lie on the Cytoplasmic side of the membrane. The disordered stretch occupies residues 355–440 (PHQVGADRGS…PPPPPPPPPP (86 aa)). Over residues 381 to 407 (RSEKVQREPFKKAGEEPKVLHDLERLR) the composition is skewed to basic and acidic residues. Pro residues predominate over residues 426 to 440 (MPPPPPPPPPPPPPP). One can recognise a Protein kinase domain in the interval 485-763 (FAQENLIGSG…EVVQDLLDMI (279 aa)). ATP contacts are provided by residues 491–499 (IGSGMLGSV) and K513.

This sequence belongs to the protein kinase superfamily. Ser/Thr protein kinase family. In terms of tissue distribution, expressed in seedlings, roots, stems, leaves, flowers and siliques.

It is found in the membrane. In terms of biological role, not essential for epidermal patterning and not redundant with STRUBBELIG. This Arabidopsis thaliana (Mouse-ear cress) protein is Protein STRUBBELIG-RECEPTOR FAMILY 3 (SRF3).